Reading from the N-terminus, the 151-residue chain is FUN14 domain-containing protein 1 (151 aa).

Residues 14 to 17 (YEVL) carry the YXXL motif. Helical transmembrane passes span 44–64 (YSVA…GFLF), 71–91 (AATA…GGYI), and 130–150 (FIKK…LGLA).

Belongs to the FUN14 family.

The protein localises to the mitochondrion outer membrane. Functionally, acts as an activator of hypoxia-induced mitophagy, an important mechanism for mitochondrial quality control. The protein is FUN14 domain-containing protein 1 (fundc1) of Xenopus tropicalis (Western clawed frog).